Reading from the N-terminus, the 571-residue chain is 15-cis-phytoene desaturase, chloroplastic/chromoplastic (571 aa).

The N-terminal 96 residues, 1 to 96 (MDTGCLSSMN…FRNSERPSKP (96 aa)), are a transit peptide targeting the chloroplast and chromoplast. Residues alanine 107, 126 to 127 (EA), lysine 134, 151 to 152 (HI), and tyrosine 157 each bind FAD. Position 292 (arginine 292) interacts with substrate. Positions 334 and 523 each coordinate FAD. Substrate is bound at residue alanine 531. Methionine 533 provides a ligand contact to FAD.

Belongs to the carotenoid/retinoid oxidoreductase family. In terms of assembly, homotetramer. It depends on FAD as a cofactor.

It is found in the plastid. The protein resides in the chloroplast. The protein localises to the chromoplast. It localises to the membrane. The catalysed reaction is 2 a plastoquinone + 15-cis-phytoene = 9,9',15-tri-cis-zeta-carotene + 2 a plastoquinol. Its pathway is carotenoid biosynthesis; lycopene biosynthesis. Functionally, converts phytoene into zeta-carotene via the intermediary of phytofluene by the symmetrical introduction of two double bonds at the C-11 and C-11' positions of phytoene with a concomitant isomerization of two neighboring double bonds at the C9 and C9' positions from trans to cis. The chain is 15-cis-phytoene desaturase, chloroplastic/chromoplastic (PDS1) from Zea mays (Maize).